The chain runs to 289 residues: Ribosomal protein L11 methyltransferase (289 aa).

S-adenosyl-L-methionine-binding residues include threonine 135, glycine 156, aspartate 179, and asparagine 225.

The protein belongs to the methyltransferase superfamily. PrmA family.

It localises to the cytoplasm. The enzyme catalyses L-lysyl-[protein] + 3 S-adenosyl-L-methionine = N(6),N(6),N(6)-trimethyl-L-lysyl-[protein] + 3 S-adenosyl-L-homocysteine + 3 H(+). Its function is as follows. Methylates ribosomal protein L11. The sequence is that of Ribosomal protein L11 methyltransferase from Chlorobaculum tepidum (strain ATCC 49652 / DSM 12025 / NBRC 103806 / TLS) (Chlorobium tepidum).